The following is a 332-amino-acid chain: Tyrosine--tRNA ligase (332 aa).

5 residues coordinate L-tyrosine: Tyr32, Tyr156, Gln160, Asp163, and Gln178. The 'KMSKS' region motif lies at 219-223 (KMSKS). Lys222 is an ATP binding site.

The protein belongs to the class-I aminoacyl-tRNA synthetase family. TyrS type 4 subfamily. As to quaternary structure, homodimer.

It localises to the cytoplasm. The catalysed reaction is tRNA(Tyr) + L-tyrosine + ATP = L-tyrosyl-tRNA(Tyr) + AMP + diphosphate + H(+). Catalyzes the attachment of tyrosine to tRNA(Tyr) in a two-step reaction: tyrosine is first activated by ATP to form Tyr-AMP and then transferred to the acceptor end of tRNA(Tyr). This is Tyrosine--tRNA ligase from Thermoplasma acidophilum (strain ATCC 25905 / DSM 1728 / JCM 9062 / NBRC 15155 / AMRC-C165).